The sequence spans 101 residues: Small ribosomal subunit protein uS14 (101 aa).

The segment at 52-72 (PRDSSPVRQRRRCRSTGRPRG) is disordered. A compositionally biased stretch (basic residues) spans 59–72 (RQRRRCRSTGRPRG).

The protein belongs to the universal ribosomal protein uS14 family. As to quaternary structure, part of the 30S ribosomal subunit. Contacts proteins S3 and S10.

Its function is as follows. Binds 16S rRNA, required for the assembly of 30S particles and may also be responsible for determining the conformation of the 16S rRNA at the A site. This chain is Small ribosomal subunit protein uS14, found in Nitrosococcus oceani (strain ATCC 19707 / BCRC 17464 / JCM 30415 / NCIMB 11848 / C-107).